Reading from the N-terminus, the 637-residue chain is Biosynthetic arginine decarboxylase (637 aa).

The residue at position 101 (Lys101) is an N6-(pyridoxal phosphate)lysine. Position 286 to 296 (286 to 296 (FDVGGGLAVDY)) interacts with substrate.

The protein belongs to the Orn/Lys/Arg decarboxylase class-II family. SpeA subfamily. Mg(2+) serves as cofactor. Requires pyridoxal 5'-phosphate as cofactor.

The catalysed reaction is L-arginine + H(+) = agmatine + CO2. The protein operates within amine and polyamine biosynthesis; agmatine biosynthesis; agmatine from L-arginine: step 1/1. Functionally, catalyzes the biosynthesis of agmatine from arginine. The sequence is that of Biosynthetic arginine decarboxylase from Shewanella baltica (strain OS223).